We begin with the raw amino-acid sequence, 226 residues long: MLLHIPGVFTRDEVGRIREALEQADWADGKITAGYQSAKAKHNLQLPEGHPLAQEIGAAMLDRLWQNPLFMSAALPHKVFPPLINCYTAGGSFDFHIDNAVRQPKGSPERVRTDLSSTLFFSDPEDYEGGELEIQDTFGLQRVKLPAGDMVLYPGTSLHKVNPVTRGARYASFFWTQSLVREDSQRALLFEMDGAIQELTRDVPDHPSLVRLTGTYHNLLRRWVEV.

One can recognise a Fe2OG dioxygenase domain in the interval 78 to 178; it reads KVFPPLINCY…RYASFFWTQS (101 aa). 3 residues coordinate Fe cation: histidine 96, aspartate 98, and histidine 159. Arginine 169 serves as a coordination point for 2-oxoglutarate.

Fe(2+) serves as cofactor. L-ascorbate is required as a cofactor.

This is PKHD-type hydroxylase PFL_0865 from Pseudomonas fluorescens (strain ATCC BAA-477 / NRRL B-23932 / Pf-5).